The following is a 274-amino-acid chain: Formamidopyrimidine-DNA glycosylase (274 aa).

The Schiff-base intermediate with DNA role is filled by Pro-2. The active-site Proton donor is the Glu-3. The active-site Proton donor; for beta-elimination activity is Lys-57. 3 residues coordinate DNA: His-92, Arg-111, and Lys-152. An FPG-type zinc finger spans residues 237 to 271 (QVYGRKGEECNDCGSIIEAKVIGQRNSFYCPKCQR). The active-site Proton donor; for delta-elimination activity is the Arg-261.

The protein belongs to the FPG family. As to quaternary structure, monomer. Zn(2+) is required as a cofactor.

It catalyses the reaction Hydrolysis of DNA containing ring-opened 7-methylguanine residues, releasing 2,6-diamino-4-hydroxy-5-(N-methyl)formamidopyrimidine.. The catalysed reaction is 2'-deoxyribonucleotide-(2'-deoxyribose 5'-phosphate)-2'-deoxyribonucleotide-DNA = a 3'-end 2'-deoxyribonucleotide-(2,3-dehydro-2,3-deoxyribose 5'-phosphate)-DNA + a 5'-end 5'-phospho-2'-deoxyribonucleoside-DNA + H(+). Involved in base excision repair of DNA damaged by oxidation or by mutagenic agents. Acts as a DNA glycosylase that recognizes and removes damaged bases. Has a preference for oxidized purines, such as 7,8-dihydro-8-oxoguanine (8-oxoG). Has AP (apurinic/apyrimidinic) lyase activity and introduces nicks in the DNA strand. Cleaves the DNA backbone by beta-delta elimination to generate a single-strand break at the site of the removed base with both 3'- and 5'-phosphates. This is Formamidopyrimidine-DNA glycosylase from Glaesserella parasuis serovar 5 (strain SH0165) (Haemophilus parasuis).